The chain runs to 214 residues: MHFLVVYILIHFHAYRGMAALPLFSTLPKITSCCDSYVVINSSTSVSSLISTCLDGEILFQNEGQKFCRPLTDNRTIVYTMQDQVQKPLSVTWMDFNLVISDYGRDVINNLTKSAMLARKNGPRYLQMENGPRYLQMETRISDLFRHECYQDNYYVLDKKLQMFYPTTHSNELLFYPSEATLPSPWQEPPFSSPWPEPTFPSRWYWLLLNYTNY.

Residues 1-19 form the signal peptide; it reads MHFLVVYILIHFHAYRGMA. N-linked (GlcNAc...) asparagine; by host glycosylation is found at Asn41, Asn74, Asn110, and Asn210.

In terms of assembly, interacts with isoform gQ1. The heterodimer gQ1-gQ2 associates with the glycoprotein complex gH-gL to form a tetrameric complex. The gH/gL/gQ1/gQ2 complex binds to human receptor CD46. Glycosylated by host.

It is found in the virion membrane. The protein resides in the host endoplasmic reticulum-Golgi intermediate compartment. Plays a role in virus entry by participating in host receptor binding at the cell surface. The chain is Glycoprotein Q2 from Human herpesvirus 6A (strain Uganda-1102) (HHV-6 variant A).